Consider the following 180-residue polypeptide: 3-hydroxyanthranilate 3,4-dioxygenase (180 aa).

O2 is bound at residue arginine 46. Residues histidine 50, glutamate 56, and histidine 94 each coordinate Fe cation. Residue glutamate 56 coordinates substrate. Positions 98 and 109 each coordinate substrate. The Fe cation site is built by cysteine 124, cysteine 127, cysteine 161, and cysteine 164.

It belongs to the 3-HAO family. In terms of assembly, homodimer. It depends on Fe(2+) as a cofactor.

It catalyses the reaction 3-hydroxyanthranilate + O2 = (2Z,4Z)-2-amino-3-carboxymuconate 6-semialdehyde. Its pathway is cofactor biosynthesis; NAD(+) biosynthesis; quinolinate from L-kynurenine: step 3/3. In terms of biological role, catalyzes the oxidative ring opening of 3-hydroxyanthranilate to 2-amino-3-carboxymuconate semialdehyde, which spontaneously cyclizes to quinolinate. This chain is 3-hydroxyanthranilate 3,4-dioxygenase, found in Jannaschia sp. (strain CCS1).